Reading from the N-terminus, the 553-residue chain is Glucagon-like peptide 2 receptor (553 aa).

The Extracellular portion of the chain corresponds to 1-173 (MKLGSSRAGP…SFKQNVDRYA (173 aa)). 3 cysteine pairs are disulfide-bonded: C83/C105, C96/C137, and C118/C159. N97, N113, N148, and N162 each carry an N-linked (GlcNAc...) asparagine glycan. The helical transmembrane segment at 174-198 (LLSTLQLMYTVGYSFSLISLFLALT) threads the bilayer. Topologically, residues 199 to 210 (LLLFLRKLHCTR) are cytoplasmic. Residues 211–235 (NYIHMNLFASFILRTLAVLVKDVVF) traverse the membrane as a helical segment. The Extracellular segment spans residues 236–261 (YNSYSKRPDNENGWMSYLSEMSTSCR). The helical transmembrane segment at 262–285 (SVQVLLHYFVGANYLWLLVEGLYL) threads the bilayer. At 286–299 (HTLLEPTVLPERRL) the chain is on the cytoplasmic side. Residues 300-321 (WPRYLLLGWAFPVLFVVPWGFA) traverse the membrane as a helical segment. Over 322 to 339 (RAHLENTGCWTTNGNKKI) the chain is Extracellular. A helical membrane pass occupies residues 340–362 (WWIIRGPMMLCVTVNFFIFLKIL). Residues 363–386 (KLLISKLKAHQMCFRDYKYRLAKS) lie on the Cytoplasmic side of the membrane. Residues 387-405 (TLVLIPLLGVHEILFSFIT) form a helical membrane-spanning segment. The Extracellular portion of the chain corresponds to 406–417 (DDQVEGFAKLIR). The helical transmembrane segment at 418–438 (LFIQLTLSSFHGFLVALQYGF) threads the bilayer. Residues 439–550 (ANGEVKAELR…ANTMEEILEE (112 aa)) lie on the Cytoplasmic side of the membrane.

Belongs to the G-protein coupled receptor 2 family.

It localises to the cell membrane. Functionally, this is a receptor for glucagon-like peptide 2. The activity of this receptor is mediated by G proteins which activate adenylyl cyclase. The polypeptide is Glucagon-like peptide 2 receptor (GLP2R) (Homo sapiens (Human)).